A 214-amino-acid chain; its full sequence is 3-isopropylmalate dehydratase small subunit (214 aa).

Belongs to the LeuD family. LeuD type 1 subfamily. Heterodimer of LeuC and LeuD.

The catalysed reaction is (2R,3S)-3-isopropylmalate = (2S)-2-isopropylmalate. It functions in the pathway amino-acid biosynthesis; L-leucine biosynthesis; L-leucine from 3-methyl-2-oxobutanoate: step 2/4. Functionally, catalyzes the isomerization between 2-isopropylmalate and 3-isopropylmalate, via the formation of 2-isopropylmaleate. This is 3-isopropylmalate dehydratase small subunit from Pseudomonas putida (strain GB-1).